Consider the following 147-residue polypeptide: Small ribosomal subunit protein uS12 (147 aa).

The protein belongs to the universal ribosomal protein uS12 family. As to quaternary structure, part of the 30S ribosomal subunit.

In terms of biological role, with S4 and S5 plays an important role in translational accuracy. Located at the interface of the 30S and 50S subunits. The sequence is that of Small ribosomal subunit protein uS12 from Methanococcus maripaludis (strain C5 / ATCC BAA-1333).